The chain runs to 465 residues: Pancreatic triacylglycerol lipase (465 aa).

The signal sequence occupies residues 1–16 (MLLLWALPLLLGAVAG). 2 cysteine pairs are disulfide-bonded: cysteine 20–cysteine 26 and cysteine 108–cysteine 119. The Nucleophile role is filled by serine 170. Catalysis depends on aspartate 194, which acts as the Charge relay system. The Ca(2+) site is built by glutamate 205, arginine 208, aspartate 210, and aspartate 213. Cysteines 255 and 279 form a disulfide. Histidine 281 functions as the Charge relay system in the catalytic mechanism. Intrachain disulfides connect cysteine 303–cysteine 314, cysteine 317–cysteine 321, and cysteine 449–cysteine 465. In terms of domain architecture, PLAT spans 355 to 465 (WRYQVAVTLS…EDILLTLTPC (111 aa)).

Belongs to the AB hydrolase superfamily. Lipase family. In terms of assembly, forms a 1:1 stoichiometric complex with (pro)colipase/CLPS.

Its subcellular location is the secreted. It catalyses the reaction a triacylglycerol + H2O = a diacylglycerol + a fatty acid + H(+). It carries out the reaction 1,2,3-tributanoylglycerol + H2O = dibutanoylglycerol + butanoate + H(+). The enzyme catalyses 1,2,3-tri-(9Z-octadecenoyl)-glycerol + H2O = di-(9Z)-octadecenoylglycerol + (9Z)-octadecenoate + H(+). The catalysed reaction is all-trans-retinyl hexadecanoate + H2O = all-trans-retinol + hexadecanoate + H(+). It catalyses the reaction 1,2-di-(9Z-octadecenoyl)-glycerol + H2O = (9Z-octadecenoyl)-glycerol + (9Z)-octadecenoate + H(+). Inhibited by bile salts, is reactivated by (pro)colipase/CLPS. Functionally, plays an important role in fat metabolism. It preferentially splits the esters of long-chain fatty acids at positions 1 and 3, producing mainly 2-monoacylglycerol and free fatty acids, and shows considerably higher activity against insoluble emulsified substrates than against soluble ones. The chain is Pancreatic triacylglycerol lipase (PNLIP) from Oryctolagus cuniculus (Rabbit).